A 246-amino-acid polypeptide reads, in one-letter code: uncharacterized protein (246 aa).

This sequence belongs to the IIV-6 170L family.

This is an uncharacterized protein from Acheta domesticus (House cricket).